The sequence spans 309 residues: Ornithine carbamoyltransferase (309 aa).

Carbamoyl phosphate is bound by residues 57 to 60 (STRT), glutamine 84, arginine 108, and 135 to 138 (HPCQ). Residues asparagine 166, aspartate 224, and 228–229 (SM) each bind L-ornithine. Carbamoyl phosphate contacts are provided by residues 264–265 (CL) and arginine 292.

The protein belongs to the aspartate/ornithine carbamoyltransferase superfamily. OTCase family.

The protein localises to the cytoplasm. The enzyme catalyses carbamoyl phosphate + L-ornithine = L-citrulline + phosphate + H(+). It participates in amino-acid biosynthesis; L-arginine biosynthesis; L-arginine from L-ornithine and carbamoyl phosphate: step 1/3. Functionally, reversibly catalyzes the transfer of the carbamoyl group from carbamoyl phosphate (CP) to the N(epsilon) atom of ornithine (ORN) to produce L-citrulline. The polypeptide is Ornithine carbamoyltransferase (Paracidovorax citrulli (strain AAC00-1) (Acidovorax citrulli)).